The chain runs to 2212 residues: RNA-directed RNA polymerase L (2212 aa).

An endonuclease region spans residues 30 to 288 (KDALLSQVHP…SHEENDSLDC (259 aa)). The Mn(2+) site is built by glutamate 55, aspartate 93, and glutamate 106. Residue lysine 119 is part of the active site. The disordered stretch occupies residues 922–942 (MKSSDAREERLQDPKRNEKNA). The segment covering 923-942 (KSSDAREERLQDPKRNEKNA) has biased composition (basic and acidic residues). The RdRp catalytic domain occupies 1175 to 1371 (CDMKMAVNNG…YLSSKLNKFV (197 aa)). Mg(2+) is bound at residue aspartate 1333.

The protein belongs to the Bunyavirales RNA polymerase family. As to quaternary structure, homomultimer; the oligomeric structure is essential for the polymerase activity. Interacts with nucleoprotein N. Interacts with protein Z; this interaction inhibits viral transcription and replication, Z partially blocks the product exit tunnel for the releasing nascent RNA product. Mn(2+) serves as cofactor. Requires Mg(2+) as cofactor.

The protein resides in the virion. The protein localises to the host cytoplasm. The catalysed reaction is RNA(n) + a ribonucleoside 5'-triphosphate = RNA(n+1) + diphosphate. Functionally, RNA-dependent RNA polymerase, which is responsible for the replication and transcription of the viral RNA genome using antigenomic RNA as an intermediate. During transcription, synthesizes subgenomic RNAs and assures their capping by a cap-snatching mechanism, which involves the endonuclease activity cleaving the host capped pre-mRNAs. These short capped RNAs are then used as primers for viral transcription. The 3'-end of subgenomic mRNAs molecules are heterogeneous and not polyadenylated. The replicase function is to direct synthesis of antigenomic and genomic RNA which are encapsidated and non capped. As a consequence of the use of the same enzyme for both transcription and replication, these mechanisms need to be well coordinated. These processes may be regulated by proteins N and Z in a dose-dependent manner. Z protein inhibits the viral polymerase L und thus the viral transcription and RNA synthesis. This is RNA-directed RNA polymerase L from Sabia mammarenavirus (isolate Human/Brasil/SPH114202/1990) (SABV).